A 636-amino-acid chain; its full sequence is Nuclear receptor subfamily 2 group C member 1 (636 aa).

Positions Val-149–Cys-224 form a DNA-binding region, nuclear receptor. 2 NR C4-type zinc fingers span residues Cys-152–Cys-172 and Cys-188–Cys-207. Residues Glu-382 to Glu-623 form the NR LBD domain.

This sequence belongs to the nuclear hormone receptor family. NR2 subfamily.

It is found in the nucleus. Orphan nuclear receptor. Binds the IR7 element in the promoter of its own gene in an autoregulatory negative feedback mechanism. Primarily repressor of a broad range of genes. Binds to hormone response elements (HREs) consisting of two 5'-AGGTCA-3' half site direct repeat consensus sequences. This Xenopus tropicalis (Western clawed frog) protein is Nuclear receptor subfamily 2 group C member 1.